The chain runs to 542 residues: Chaperonin GroEL 2 (542 aa).

ATP-binding positions include 30-33 (TLGP), K51, 87-91 (DGTTT), G415, and D496.

It belongs to the chaperonin (HSP60) family. In terms of assembly, forms a cylinder of 14 subunits composed of two heptameric rings stacked back-to-back. Interacts with the co-chaperonin GroES.

Its subcellular location is the cytoplasm. It carries out the reaction ATP + H2O + a folded polypeptide = ADP + phosphate + an unfolded polypeptide.. Its function is as follows. Together with its co-chaperonin GroES, plays an essential role in assisting protein folding. The GroEL-GroES system forms a nano-cage that allows encapsulation of the non-native substrate proteins and provides a physical environment optimized to promote and accelerate protein folding. In Cereibacter sphaeroides (strain ATCC 17023 / DSM 158 / JCM 6121 / CCUG 31486 / LMG 2827 / NBRC 12203 / NCIMB 8253 / ATH 2.4.1.) (Rhodobacter sphaeroides), this protein is Chaperonin GroEL 2.